A 126-amino-acid polypeptide reads, in one-letter code: Protein ApaG (126 aa).

Residues 2–126 (DISTPCIKCQ…FRLAIPNILN (125 aa)) enclose the ApaG domain.

The polypeptide is Protein ApaG (Vibrio atlanticus (strain LGP32) (Vibrio splendidus (strain Mel32))).